The following is a 294-amino-acid chain: Nucleophosmin (294 aa).

The segment covering 121–133 (LEEEPESEDEEED) has biased composition (acidic residues). Residues 121-244 (LEEEPESEDE…PKTPKVPLSL (124 aa)) form a disordered region. The Nuclear localization signal signature appears at 153-158 (PQKKPK). The span at 161 to 186 (EDDEDDDEDEDDDEDDEDDLDDDEEE) shows a compositional bias: acidic residues. Positions 190–196 (PMKKPAR) match the Nuclear localization signal motif. Residues 223–233 (KTPDSKKDKSL) show a composition bias toward basic and acidic residues.

The protein belongs to the nucleoplasmin family. As to quaternary structure, decamer formed by two pentameric rings associated in a head-to-head fashion. In terms of processing, phosphorylated.

The protein resides in the cytoplasm. It localises to the nucleus. Its subcellular location is the nucleoplasm. It is found in the nucleolus. In terms of biological role, acts as a chaperonin for the core histones H3, H2B and H4. Associated with nucleolar ribonucleoprotein structures and bind single-stranded nucleic acids. It may function in the assembly and/or transport of ribosome. May stimulate endonuclease activity on apurinic/apyrimidinic (AP) double-stranded DNA. May inhibit endonuclease activity on AP single-stranded RNA. In Gallus gallus (Chicken), this protein is Nucleophosmin (NPM1).